An 800-amino-acid chain; its full sequence is Endonuclease MutS2 (800 aa).

Position 336–343 (336–343) interacts with ATP; the sequence is GPNTGGKT. The Smr domain maps to 725–800; that stretch reads LDLRGVRYEA…GDGATIVELK (76 aa).

The protein belongs to the DNA mismatch repair MutS family. MutS2 subfamily. Homodimer. Binds to stalled ribosomes, contacting rRNA.

In terms of biological role, endonuclease that is involved in the suppression of homologous recombination and thus may have a key role in the control of bacterial genetic diversity. Acts as a ribosome collision sensor, splitting the ribosome into its 2 subunits. Detects stalled/collided 70S ribosomes which it binds and splits by an ATP-hydrolysis driven conformational change. Acts upstream of the ribosome quality control system (RQC), a ribosome-associated complex that mediates the extraction of incompletely synthesized nascent chains from stalled ribosomes and their subsequent degradation. Probably generates substrates for RQC. This Leuconostoc mesenteroides subsp. mesenteroides (strain ATCC 8293 / DSM 20343 / BCRC 11652 / CCM 1803 / JCM 6124 / NCDO 523 / NBRC 100496 / NCIMB 8023 / NCTC 12954 / NRRL B-1118 / 37Y) protein is Endonuclease MutS2.